A 565-amino-acid polypeptide reads, in one-letter code: Deformed epidermal autoregulatory factor 1 homolog (565 aa).

2 disordered regions span residues 34–62 (GGEA…ETPR) and 162–190 (GLKG…KGGT). Residues 169 to 181 (PLTPGPQSPPTPL) are compositionally biased toward pro residues. Thr-171 bears the Phosphothreonine mark. Ser-176 carries the post-translational modification Phosphoserine. Phosphothreonine is present on Thr-179. Residues 193-273 (NWDPSVYDSE…QCLIQDGILN (81 aa)) form the SAND domain. The Nuclear localization signal motif lies at 301–316 (KRRKKENELPTTPVKK). The interaction with LMO4 stretch occupies residues 403-478 (IAPFPEAALP…QLKTLFEQAK (76 aa)). Thr-432 is subject to Phosphothreonine. Ser-448 bears the Phosphoserine mark. Cys-504, Cys-507, Cys-515, Cys-518, Cys-524, Cys-528, His-536, and Cys-540 together coordinate Zn(2+). Residues 504 to 540 (CVNCGREAMSECTGCHKVNYCSTFCQRKDWKDHQHIC) form an MYND-type zinc finger.

As to quaternary structure, homodimer. Isoform 1 and isoform 4 may form a heterodimer. Interacts with LMO2 and CLIM2. Interacts with LMO4; LMO4 blocks export from nucleus. May interact with the corepressors NCOR1 and NCRO2. Identified in a complex with the XRCC5 and XRCC6 heterodimer. Interacts (via the SAND domain) with the DNA-PK complex subunit XRCC6; the interaction is direct and may be inhibited by DNA-binding. Post-translationally, may be phosphorylated by DNA-PK complex in a DNA independent manner (in vitro). As to expression, expressed in various tissues and cells such as in peripheral mononuclear cells and hormone-secreting pituitary cells. Expression in pancreatic lymph nodes of patients with type 1 diabetes is 20 times higher than in healthy controls. Highly expressed in fetal and adult brain.

It is found in the nucleus. The protein resides in the cytoplasm. It localises to the secreted. Transcription factor that binds to sequence with multiple copies of 5'-TTC[CG]G-3' present in its own promoter and that of the HNRPA2B1 gene. Down-regulates transcription of these genes. Binds to the retinoic acid response element (RARE) 5'-AGGGTTCACCGAAAGTTCA-3'. Activates the proenkephalin gene independently of promoter binding, probably through protein-protein interaction. When secreted, behaves as an inhibitor of cell proliferation, by arresting cells in the G0 or G1 phase. Required for neural tube closure and skeletal patterning. Regulates epithelial cell proliferation and side-branching in the mammary gland. Controls the expression of peripheral tissue antigens in pancreatic lymph nodes. Isoform 1 displays greater transcriptional activity than isoform 4. Isoform 4 may inhibit transcriptional activity of isoform 1 by interacting with isoform 1 and retaining it in the cytoplasm. Transcriptional activator of EIF4G3. The chain is Deformed epidermal autoregulatory factor 1 homolog (DEAF1) from Homo sapiens (Human).